The chain runs to 468 residues: ATP synthase subunit beta (468 aa).

155–162 is an ATP binding site; it reads GGAGVGKT.

It belongs to the ATPase alpha/beta chains family. As to quaternary structure, F-type ATPases have 2 components, CF(1) - the catalytic core - and CF(0) - the membrane proton channel. CF(1) has five subunits: alpha(3), beta(3), gamma(1), delta(1), epsilon(1). CF(0) has three main subunits: a(1), b(2) and c(9-12). The alpha and beta chains form an alternating ring which encloses part of the gamma chain. CF(1) is attached to CF(0) by a central stalk formed by the gamma and epsilon chains, while a peripheral stalk is formed by the delta and b chains.

It is found in the cell membrane. It catalyses the reaction ATP + H2O + 4 H(+)(in) = ADP + phosphate + 5 H(+)(out). Its function is as follows. Produces ATP from ADP in the presence of a proton gradient across the membrane. The catalytic sites are hosted primarily by the beta subunits. This is ATP synthase subunit beta from Streptococcus pneumoniae (strain ATCC BAA-255 / R6).